The sequence spans 122 residues: MNFSRRSLRVGAIVNVSVRSLLMRGKNRNKCNSIIFLTVGLLLFIAALALGVLVLFNGYQVNVNANGVDLKPFEIVHFPFAVKTFLSVLTFVLAAFGFVCMVASFLYFVSFKKLKPKANSAS.

2 consecutive transmembrane segments (helical) span residues 34–54 (IIFL…GVLV) and 91–111 (FVLA…FVSF).

Its subcellular location is the cell membrane. This is an uncharacterized protein from Mycoplasma pneumoniae (strain ATCC 29342 / M129 / Subtype 1) (Mycoplasmoides pneumoniae).